Consider the following 254-residue polypeptide: 3-deoxy-manno-octulosonate cytidylyltransferase (254 aa).

The protein belongs to the KdsB family.

It localises to the cytoplasm. It catalyses the reaction 3-deoxy-alpha-D-manno-oct-2-ulosonate + CTP = CMP-3-deoxy-beta-D-manno-octulosonate + diphosphate. It functions in the pathway nucleotide-sugar biosynthesis; CMP-3-deoxy-D-manno-octulosonate biosynthesis; CMP-3-deoxy-D-manno-octulosonate from 3-deoxy-D-manno-octulosonate and CTP: step 1/1. Its pathway is bacterial outer membrane biogenesis; lipopolysaccharide biosynthesis. Functionally, activates KDO (a required 8-carbon sugar) for incorporation into bacterial lipopolysaccharide in Gram-negative bacteria. The sequence is that of 3-deoxy-manno-octulosonate cytidylyltransferase from Bordetella parapertussis (strain 12822 / ATCC BAA-587 / NCTC 13253).